A 280-amino-acid polypeptide reads, in one-letter code: MKLCFNEATTLENSNLKQDLELCEKHGYDYIEIRTMDKLPEYLKDHSLADLAEYFRTHHIKPLALNALVFFNNRDEKGYREIISEFKSMMETCRTLGVKYVVAVPLVTERKILKEEIKKSSAEVLTELSDIAEPYGVNIALEFVGHPQCTVNTFEQAYDIVNAVGRDNVGLVFDSFHFHAMGSNIESLKQADGKKIFIYHIDDTEDFPIGFLTDEDRVWPGQGAIDLDAHLSALKEIGFNDVVSVELFRPEYYKLTAEETIKTAKETTEAVVSKYFMKEA.

Glutamate 142, aspartate 174, histidine 200, and glutamate 246 together coordinate a divalent metal cation.

It belongs to the IolI family. Requires a divalent metal cation as cofactor.

The catalysed reaction is scyllo-inosose = scyllo-inosine. The protein operates within polyol metabolism; myo-inositol degradation into acetyl-CoA. In terms of biological role, involved in the reversible interconverion of 2-keto-myo-inositol (2KMI, inosose or 2,4,6/3,5-pentahydroxycyclohexanone) to 1-keto-D-chiro-inositol (1KDCI or 2,3,5/4,6-pentahydroxycyclohexanone). This is Inosose isomerase (iolI) from Bacillus velezensis (strain DSM 23117 / BGSC 10A6 / LMG 26770 / FZB42) (Bacillus amyloliquefaciens subsp. plantarum).